The chain runs to 240 residues: RING finger protein 151 (240 aa).

Residues 20–58 (CSVCHGVLKRPVRLPCSHIFCKKCILRWLARQKTCPCCR) form an RING-type zinc finger. Residues 101–156 (GHQDSCPFELMVCPNEGCMLRVPRGALDEHRQNCQHGAYHRCSLGCGATLGPVERA) form a TRAF-type zinc finger.

This Bos taurus (Bovine) protein is RING finger protein 151 (RNF151).